The chain runs to 354 residues: Fructose-bisphosphate aldolase (354 aa).

A D-glyceraldehyde 3-phosphate-binding site is contributed by Ser-50. Asp-83 acts as the Proton donor in catalysis. Zn(2+)-binding residues include His-84, Asp-105, Glu-142, and His-198. Gly-199 lines the dihydroxyacetone phosphate pocket. Zn(2+) is bound at residue His-232. Dihydroxyacetone phosphate is bound by residues 233–235 and 275–278; these read GSS and NIDT.

This sequence belongs to the class II fructose-bisphosphate aldolase family. It depends on Zn(2+) as a cofactor.

It carries out the reaction beta-D-fructose 1,6-bisphosphate = D-glyceraldehyde 3-phosphate + dihydroxyacetone phosphate. It participates in carbohydrate degradation; glycolysis; D-glyceraldehyde 3-phosphate and glycerone phosphate from D-glucose: step 4/4. In terms of biological role, catalyzes the aldol condensation of dihydroxyacetone phosphate (DHAP or glycerone-phosphate) with glyceraldehyde 3-phosphate (G3P) to form fructose 1,6-bisphosphate (FBP) in gluconeogenesis and the reverse reaction in glycolysis. The chain is Fructose-bisphosphate aldolase (fba) from Stutzerimonas stutzeri (Pseudomonas stutzeri).